The following is an 80-amino-acid chain: Defensin-like protein 46 (80 aa).

The signal sequence occupies residues 1–27; it reads MGSTKTLVTCFLTIILAVSLSNHNVLA. 4 disulfides stabilise this stretch: Cys40–Cys78, Cys44–Cys65, Cys50–Cys76, and Cys54–Cys77.

The protein belongs to the DEFL family.

Its subcellular location is the secreted. In Arabidopsis thaliana (Mouse-ear cress), this protein is Defensin-like protein 46.